The sequence spans 285 residues: NAD kinase (285 aa).

The active-site Proton acceptor is the D67. Residues 67–68, 141–142, R152, K169, D171, 182–187, and Q242 each bind NAD(+); these read DG, ND, and TGYSLS.

It belongs to the NAD kinase family. Requires a divalent metal cation as cofactor.

The protein localises to the cytoplasm. It carries out the reaction NAD(+) + ATP = ADP + NADP(+) + H(+). In terms of biological role, involved in the regulation of the intracellular balance of NAD and NADP, and is a key enzyme in the biosynthesis of NADP. Catalyzes specifically the phosphorylation on 2'-hydroxyl of the adenosine moiety of NAD to yield NADP. This Trichlorobacter lovleyi (strain ATCC BAA-1151 / DSM 17278 / SZ) (Geobacter lovleyi) protein is NAD kinase.